Here is a 1055-residue protein sequence, read N- to C-terminus: MDS1 and EVI1 complex locus protein EVI1-A (1055 aa).

C2H2-type zinc fingers lie at residues 21–48, 75–97, and 103–125; these read YRCEECDQLFESKTELSDHQKYPCVTPH, HECKECDQVFPDMQSLEKHLLSH, and YKCDQCPKAFNWKSNLIRHQMSH. The segment at 131-155 adopts a C2H2-type 4; degenerate zinc-finger fold; that stretch reads YECENCSKQVFTDPSNLQRHIRSQH. 2 C2H2-type zinc fingers span residues 161–183 and 189–211; these read HACSDCGKTFATSSGLKQHKHIH and FVCEVCHKSYTQFSNLCRHKRMH. Residues 218 to 240 form a C2H2-type 7; atypical zinc finger; that stretch reads IKCKDCGQMFSTTSSLNKHRRFC. Disordered stretches follow at residues 324–345, 372–423, and 531–621; these read PVKGLPGVEQSSKSQSPHVNQP, FITE…SDKD, and VPLK…PELP. The span at 332–345 shows a compositional bias: polar residues; it reads EQSSKSQSPHVNQP. Residues 381-392 show a composition bias toward basic and acidic residues; the sequence is RPHEKISDHSES. Positions 399–413 are enriched in polar residues; sequence STPSGSDLETTSGSD. The Nuclear localization signal motif lies at 422–435; the sequence is KDKLKENGKLYKDK. A compositionally biased stretch (basic and acidic residues) spans 531-566; sequence VPLKIEPESPKETKKVQKGKTESPFDLTTKRKEEKA. Residues 554–558 carry the CTBP-binding motif 1 motif; that stretch reads PFDLT. Residues 569-583 show a composition bias toward polar residues; the sequence is NVPSKSGAPTSSNHD. The CTBP-binding motif 2 signature appears at 585 to 589; it reads PLDLS. A compositionally biased stretch (polar residues) spans 591 to 601; that stretch reads GSRSRAATTKQ. Over residues 602 to 621 the composition is skewed to basic and acidic residues; it reads TEPRKNHIFNEKKDMDPELP. 3 C2H2-type zinc fingers span residues 734–756, 762–785, and 791–813; these read YTCRYCGKIFPRSANLTRHLRTH, YRCKYCDRSFSISSNLQRHVRNIH, and FKCHLCDRCFGQQTNLDRHLKKH. 2 disordered regions span residues 813–837 and 922–957; these read HENGNLSGTAASSPHSEIEGTGPIL and SVDEYEEGGKSEVNSKVSPSRYDDEDDDDDEEEDFK. Residues 816 to 827 are compositionally biased toward polar residues; the sequence is GNLSGTAASSPH. Acidic residues predominate over residues 944-954; that stretch reads DDEDDDDDEEE.

Homooligomer. Interacts with ctbp. In terms of tissue distribution, expressed dynamically during embryonic development; in the developing pronephros, specific areas of the brain (forebrain, midbrain and hindbrain), and in the majority of the visceral arch, and head mesenchyme derived from neural crest cells. Within the pronephros, expressed in the ventroposterior region of the pronephros anlagen from stage 20 (and is absent from the splanchnic layer that forms the glomus), then expression becomes restricted to the distal tubule and duct by the tadpole stage. In adults, expressed in various tissues including kidney, lung, testis, spleen and stomach.

It is found in the nucleus. The protein resides in the nucleus speckle. Functionally, transcriptional repressor during pronephros development. Plays a role in regionalization of the pronephros; may promote formation of the distal tubule and duct over formation of the glomus and proximal tubule. The sequence is that of MDS1 and EVI1 complex locus protein EVI1-A (mecom-a) from Xenopus laevis (African clawed frog).